Consider the following 92-residue polypeptide: UPF0250 protein XF_1271 (92 aa).

It belongs to the UPF0250 family.

The protein is UPF0250 protein XF_1271 of Xylella fastidiosa (strain 9a5c).